A 389-amino-acid polypeptide reads, in one-letter code: Chalcone synthase 1A (389 aa).

Cysteine 164 is an active-site residue.

This sequence belongs to the thiolase-like superfamily. Chalcone/stilbene synthases family.

The enzyme catalyses (E)-4-coumaroyl-CoA + 3 malonyl-CoA + 3 H(+) = 2',4,4',6'-tetrahydroxychalcone + 3 CO2 + 4 CoA. Its pathway is secondary metabolite biosynthesis; flavonoid biosynthesis. In terms of biological role, the primary product of this enzyme is 4,2',4',6'-tetrahydroxychalcone (also termed naringenin-chalcone or chalcone) which can under specific conditions spontaneously isomerize into naringenin. This Solanum tuberosum (Potato) protein is Chalcone synthase 1A (CHS1A).